Consider the following 206-residue polypeptide: RNA pyrophosphohydrolase (206 aa).

Positions 6 to 150 (GYRPNVGIVI…KRDVYRKVMK (145 aa)) constitute a Nudix hydrolase domain. A Nudix box motif is present at residues 38 to 59 (GGINEGENIETAMYRELYEEVG). Positions 162–191 (KPETVEKPRVERTEKRDFQKRDNQKREFRK) are enriched in basic and acidic residues. The interval 162–206 (KPETVEKPRVERTEKRDFQKRDNQKREFRKSARMWNNSHQKGKAQ) is disordered.

Belongs to the Nudix hydrolase family. RppH subfamily. A divalent metal cation serves as cofactor.

In terms of biological role, accelerates the degradation of transcripts by removing pyrophosphate from the 5'-end of triphosphorylated RNA, leading to a more labile monophosphorylated state that can stimulate subsequent ribonuclease cleavage. The chain is RNA pyrophosphohydrolase from Actinobacillus pleuropneumoniae serotype 5b (strain L20).